The chain runs to 448 residues: tRNA wybutosine-synthesizing protein 2 homolog (448 aa).

Residues S218, K225, E265, and 293 to 294 (DN) contribute to the S-adenosyl-L-methionine site.

This sequence belongs to the class I-like SAM-binding methyltransferase superfamily. TRM5/TYW2 family.

The catalysed reaction is 4-demethylwyosine(37) in tRNA(Phe) + S-adenosyl-L-methionine = 4-demethyl-7-[(3S)-3-amino-3-carboxypropyl]wyosine(37) in tRNA(Phe) + S-methyl-5'-thioadenosine + H(+). It functions in the pathway tRNA modification; wybutosine-tRNA(Phe) biosynthesis. S-adenosyl-L-methionine-dependent transferase that acts as a component of the wybutosine biosynthesis pathway. Wybutosine is a hyper modified guanosine with a tricyclic base found at the 3'-position adjacent to the anticodon of eukaryotic phenylalanine tRNA. Catalyzes the transfer of the alpha-amino-alpha-carboxypropyl (acp) group from S-adenosyl-L-methionine to the C-7 position of 4-demethylwyosine (imG-14) to produce wybutosine-86. This chain is tRNA wybutosine-synthesizing protein 2 homolog (TRMT12), found in Macaca fascicularis (Crab-eating macaque).